Reading from the N-terminus, the 602-residue chain is Adenylosuccinate synthetase (602 aa).

GTP is bound by residues 74 to 80 and 104 to 106; these read GDEGKGK and GHT. The active-site Proton acceptor is the D75. Residues D75 and G104 each contribute to the Mg(2+) site. IMP is bound by residues 75–78, 102–105, T189, K203, Q315, T331, and K459; these read DEGK and NAGH. H105 acts as the Proton donor in catalysis. Position 455 to 461 (455 to 461) interacts with substrate; sequence AVTKKPR. GTP contacts are provided by residues R461 and 589 to 591; that span reads GNG.

It belongs to the adenylosuccinate synthetase family. In terms of assembly, homodimer. The cofactor is Mg(2+).

It localises to the cytoplasm. The enzyme catalyses IMP + L-aspartate + GTP = N(6)-(1,2-dicarboxyethyl)-AMP + GDP + phosphate + 2 H(+). It participates in purine metabolism; AMP biosynthesis via de novo pathway; AMP from IMP: step 1/2. Plays an important role in the salvage pathway for purine nucleotide biosynthesis. Catalyzes the first committed step in the biosynthesis of AMP from IMP. The protein is Adenylosuccinate synthetase of Trypanosoma brucei brucei (strain 927/4 GUTat10.1).